The primary structure comprises 304 residues: Recombination-associated protein RdgC (304 aa).

This sequence belongs to the RdgC family.

The protein resides in the cytoplasm. Its subcellular location is the nucleoid. In terms of biological role, may be involved in recombination. The protein is Recombination-associated protein RdgC of Shewanella sp. (strain MR-4).